Consider the following 648-residue polypeptide: UDP-galactose:fucoside alpha-3-galactosyltransferase (648 aa).

WD repeat units lie at residues 320-358 (NHTD…GNDT), 372-420 (HKRG…IQTF), 422-461 (GHTG…FKRV), 464-505 (GHNG…NIIK), 507-546 (NQGG…NFND), 556-595 (NENS…NNNN), and 617-648 (HLNS…SWDL).

The protein belongs to the glycosyltransferase 77 family. Mn(2+) serves as cofactor.

The protein localises to the cytoplasm. The catalysed reaction is an alpha-L-fucosyl-(1-&gt;2)-beta-D-galactosyl derivative + UDP-alpha-D-galactose = an alpha-D-galactosyl-(1-&gt;3)-[alpha-L-fucosyl-(1-&gt;2)]-beta-D-galactosyl derivative + UDP + H(+). It functions in the pathway protein modification; protein glycosylation. Stimulated by dithiothreitol (DTT) in vitro. Totally inhibited by EDTA. Functionally, specifically catalyzes the transfer of a galactosyl residue to the hydroxyproline-linked saccharide on Skp1 protein (fpaA/fpaB). Catalyzes the formation of a Gal-alpha-1,3-Fuc linkage, leading to Gal-Fuc-Gal-GlcNAc-HyPro143-Skp1. The sequence is that of UDP-galactose:fucoside alpha-3-galactosyltransferase (agtA) from Dictyostelium discoideum (Social amoeba).